Consider the following 308-residue polypeptide: Homoserine kinase (308 aa).

85–95 contributes to the ATP binding site; that stretch reads PLTRGLGSSAA.

The protein belongs to the GHMP kinase family. Homoserine kinase subfamily.

It localises to the cytoplasm. It carries out the reaction L-homoserine + ATP = O-phospho-L-homoserine + ADP + H(+). The protein operates within amino-acid biosynthesis; L-threonine biosynthesis; L-threonine from L-aspartate: step 4/5. In terms of biological role, catalyzes the ATP-dependent phosphorylation of L-homoserine to L-homoserine phosphate. This is Homoserine kinase from Caldicellulosiruptor saccharolyticus (strain ATCC 43494 / DSM 8903 / Tp8T 6331).